Consider the following 220-residue polypeptide: Putative O-methyltransferase Mjls_4009 (220 aa).

S-adenosyl-L-methionine-binding positions include Val47, Glu69, 71-72 (GT), Ser77, Asp95, and Val96. A substrate-binding site is contributed by Asp143. Asp145 is a binding site for S-adenosyl-L-methionine.

This sequence belongs to the class I-like SAM-binding methyltransferase superfamily. Cation-dependent O-methyltransferase family.

In Mycobacterium sp. (strain JLS), this protein is Putative O-methyltransferase Mjls_4009.